Consider the following 575-residue polypeptide: Alpha-(1,6)-fucosyltransferase (575 aa).

At 1-9 (MRPWTGSWR) the chain is on the cytoplasmic side. Residues 10-30 (WIMLILFAWGTLLFYIGGHLV) form a helical; Signal-anchor for type II membrane protein membrane-spanning segment. Topologically, residues 31–575 (RDNDHSDHSS…KYPTYPEADK (545 aa)) are lumenal. Intrachain disulfides connect C204/C266, C212/C230, and C218/C222. The GT23 domain occupies 206–493 (KAKKLVCNIN…PDASANFRSL (288 aa)). Position 278 is a phosphoserine (S278). An SH3-binding motif is present at residues 299–305 (PRPPYLP). An important for donor substrate binding region spans residues 365 to 366 (RR). C465 and C472 are oxidised to a cystine. The SH3 domain occupies 502–563 (PNAHNQIAIY…PSYKVREKIE (62 aa)).

The protein belongs to the glycosyltransferase 23 family. Post-translationally, tyrosine phosphorylated by PKDCC/VLK. In terms of tissue distribution, highest expression in brain.

It is found in the golgi apparatus. The protein localises to the golgi stack membrane. The catalysed reaction is N(4)-{beta-D-GlcNAc-(1-&gt;2)-alpha-D-Man-(1-&gt;3)-[beta-D-GlcNAc-(1-&gt;2)-alpha-D-Man-(1-&gt;6)]-beta-D-Man-(1-&gt;4)-beta-D-GlcNAc-(1-&gt;4)-beta-D-GlcNAc}-L-asparaginyl-[protein] + GDP-beta-L-fucose = an N(4)-{beta-D-GlcNAc-(1-&gt;2)-alpha-D-Man-(1-&gt;3)-[beta-D-GlcNAc-(1-&gt;2)-alpha-D-Man-(1-&gt;6)]-beta-D-Man-(1-&gt;4)-beta-D-GlcNAc-(1-&gt;4)-[alpha-L-Fuc-(1-&gt;6)]-beta-D-GlcNAc}-L-asparaginyl-[protein] + GDP + H(+). It functions in the pathway protein modification; protein glycosylation. Catalyzes the addition of fucose in alpha 1-6 linkage to the first GlcNAc residue, next to the peptide chains in N-glycans. This chain is Alpha-(1,6)-fucosyltransferase (FUT8), found in Sus scrofa (Pig).